The chain runs to 213 residues: 2,3-bisphosphoglycerate-dependent phosphoglycerate mutase (213 aa).

Substrate is bound by residues 8–15 (RHGQSEWN), 21–22 (TG), R58, 84–87 (ERNY), K95, 111–112 (RR), and 155–156 (GN). Residue H9 is the Tele-phosphohistidine intermediate of the active site. The active-site Proton donor/acceptor is E84.

The protein belongs to the phosphoglycerate mutase family. BPG-dependent PGAM subfamily.

It catalyses the reaction (2R)-2-phosphoglycerate = (2R)-3-phosphoglycerate. Its pathway is carbohydrate degradation; glycolysis; pyruvate from D-glyceraldehyde 3-phosphate: step 3/5. In terms of biological role, catalyzes the interconversion of 2-phosphoglycerate and 3-phosphoglycerate. The chain is 2,3-bisphosphoglycerate-dependent phosphoglycerate mutase from Cytophaga hutchinsonii (strain ATCC 33406 / DSM 1761 / CIP 103989 / NBRC 15051 / NCIMB 9469 / D465).